The chain runs to 395 residues: MAEEPTYTTEQVDELIHAGLGTVDFFLSRPIDAQSSLGKGSIPPGVTAVLTSAAEAKSKPVAAGPVKPRRKKVISNTTPYTIADNIPPEKLPINTPIPNPLLPLARPHGKMTDIDIVTGNITEGSYKGVELAKLGKQTLLTRFTSNEPVSSAGSAQDPNFKRGGELIEKEQEATIGENGVLHGSEIRSKSSSGVIPGVPQSRPQLASSPAHADPAPASAENVKEIIELLKGLDLRLQTVEGKVDKILATSATIINLKNEMTSLKASVATVEGMITTIKIMDPSTPTNVPVEEIRKSLHNVPVVIAGPTSGGFTAEGSDMISMDELARPTLSSTKRITRKPESKKDLTGIKLTLMQLANDCISRPDTKTEFVTKIQAATTESQLNEIKRSIIRSAI.

Residues 65–72 form a nuclear localization signal (NLS) region; the sequence is PVKPRRKK. Residues 178–217 are disordered; sequence NGVLHGSEIRSKSSSGVIPGVPQSRPQLASSPAHADPAPA. Over residues 206-217 the composition is skewed to low complexity; the sequence is ASSPAHADPAPA. A nuclear export signal (NES) region spans residues 225 to 234; sequence IIELLKGLDL.

Belongs to the rubulavirus/avulavirus P protein family. As to quaternary structure, interacts with host ARHGAP26; this interaction promotes host RHOA activation. Interacts with host KPNA1 and KPNA6.

It is found in the host cytoplasm. Functionally, essential component of the RNA polymerase and the nascent chain assembly complex. Also required during RNA synthesis. Also plays a role in viral growth by promoting host RHOA activation and thus actin formation via ARHGAP26 inhibition. The sequence is that of Phosphoprotein (P/V) from Human parainfluenza 2 virus (HPIV-2).